We begin with the raw amino-acid sequence, 857 residues long: MAKKDTTPMMKQYYEIKEQYPDAFLFYRVGDFYELFEDDAIKGAQILELTLTHRSNKTKNPIPMAGVPHLAVDTYVNTLVEKGYKVALCEQLEDPKKAKGMVKRGIIQLITPGTMMQERPDQAKDSNYLTSVISTNSGFGLAYSDLSTGETFSTHLADFEAVANELLSLQTREVVYNGHLTDLNKDFLKKANITVSEPVEVEGEHAEISYVAQNLTDDAEIKATKQLVAYLLSTQKRSLAHLQVAQSYEPTQYLQMSHTVQTNLELIKSAKTSKKMGSLFWLLDKTSTAMGGRLLKSWIERPLLSVTEITRRQEMVQALLDDYFTREKVIDSLKGVYDLERLTGRIAFGSVNAREMLQLAHSLGAIPEILNALLETNNPHLQNFAKQIDPLKGIHDLIVNTIVDNPPLPTTEGGLIREGVSEQLDRYRDAMNNGKKWLSEMESHEREVTGINNLKVGYNKVFGYYIEVTNSNKSKVPTDRYTRKQTLTNAERYITPDLKEHEALILEAEAKSTGLEYDLFVKLREDVKKYIPALQKLAKQIASLDVLTNFATVSEQNNYVRPNFVTDKQEINVVNGRHPVVEQVMTAGSYIPNDVKMDQDTNIFLITGPNMSGKSTYMRQMALIAIMAQIGSFVPADSATLPIFDQIFTRIGAADDLISGQSTFMVEMSEANDALQHATKRSLVLFDEIGRGTATYDGMALAGAIVKYLHDKVGAKALFATHYHELTDLDQTLKHLKNIHVGATEENGKLIFLHKILPGPADQSYGIHVAQLAGLPHKVLREATTMLKRLEKQGASELQPASEQLDLFVPEEASAPAISDDEKDVLDEIQNVYLADKTPLQVMELVAQWQQELKDKD.

608–615 serves as a coordination point for ATP; that stretch reads GPNMSGKS.

Belongs to the DNA mismatch repair MutS family.

In terms of biological role, this protein is involved in the repair of mismatches in DNA. It is possible that it carries out the mismatch recognition step. This protein has a weak ATPase activity. This Lactobacillus johnsonii (strain CNCM I-12250 / La1 / NCC 533) protein is DNA mismatch repair protein MutS.